A 310-amino-acid polypeptide reads, in one-letter code: MAGAAQTTAFGQAVIGPPGSGKTTYCLGMSEFLRALGRRVAVVNLDPANEGLPYECAVDVGELVGLSDVMDELQLGPNGGLLYCMEYLEANLDWLRAKLDPLRGHYFLFDCPGQVELCTHHGALRSIFSQMTQWDLRLTAVHLVDSHYCTDPAKFISVLCTSLATMLHVELPHVNLLSKMDLIEHYGKLAFNLDYYTEVLDLSYLLDHLASDPFFRHYRQLNEKLVQLIEDYSLVSFIPLNIQDKESIQRVLQAVDKANGYCFGVQEQRSLEAMMSAAVGADFHFSSTLGLQEKYLAPSDQPVEQEAMQL.

Alanine 2 bears the N-acetylalanine mark. Residue 19–24 (GSGKTT) participates in GTP binding. The short motif at 76–78 (GPN) is the Gly-Pro-Asn (GPN)-loop; involved in dimer interface element. Residue 178-181 (SKMD) participates in GTP binding.

It belongs to the GPN-loop GTPase family. As to quaternary structure, heterodimers with GPN1 or GPN3. Binds to RNA polymerase II (RNAPII).

Small GTPase required for proper localization of RNA polymerase II and III (RNAPII and RNAPIII). May act at an RNAP assembly step prior to nuclear import. The sequence is that of GPN-loop GTPase 2 from Sus scrofa (Pig).